We begin with the raw amino-acid sequence, 196 residues long: Ribonuclease HII (196 aa).

The 196-residue stretch at methionine 1 to leucine 196 folds into the RNase H type-2 domain. 3 residues coordinate a divalent metal cation: aspartate 7, glutamate 8, and aspartate 103.

This sequence belongs to the RNase HII family. It depends on Mn(2+) as a cofactor. Mg(2+) serves as cofactor.

It localises to the cytoplasm. It catalyses the reaction Endonucleolytic cleavage to 5'-phosphomonoester.. Endonuclease that specifically degrades the RNA of RNA-DNA hybrids. This chain is Ribonuclease HII, found in Novosphingobium aromaticivorans (strain ATCC 700278 / DSM 12444 / CCUG 56034 / CIP 105152 / NBRC 16084 / F199).